The chain runs to 227 residues: Translation initiation factor 6 (227 aa).

It belongs to the eIF-6 family.

Binds to the 50S ribosomal subunit and prevents its association with the 30S ribosomal subunit to form the 70S initiation complex. In Pyrococcus furiosus (strain ATCC 43587 / DSM 3638 / JCM 8422 / Vc1), this protein is Translation initiation factor 6.